The sequence spans 584 residues: Acetylcholinesterase (584 aa).

A signal peptide is located at residue Ala1. Cys70 and Cys97 form a disulfide bridge. Ser204 (acyl-ester intermediate) is an active-site residue. Cys258 and Cys273 are oxidised to a cystine. N-linked (GlcNAc...) asparagine glycosylation occurs at Asn266. The Charge relay system role is filled by Glu335. Residue Asn351 is glycosylated (N-linked (GlcNAc...) asparagine). Cys410 and Cys530 form a disulfide bridge. His448 serves as the catalytic Charge relay system. Residue Asn465 is glycosylated (N-linked (GlcNAc...) asparagine).

It belongs to the type-B carboxylesterase/lipase family. As to quaternary structure, homotetramer; composed of disulfide-linked homodimers. Interacts with PRIMA1. The interaction with PRIMA1 is required to anchor it to the basal lamina of cells and organize into tetramers.

The protein resides in the synapse. The protein localises to the secreted. It is found in the cell membrane. The catalysed reaction is acetylcholine + H2O = choline + acetate + H(+). Functionally, terminates signal transduction at the neuromuscular junction by rapid hydrolysis of the acetylcholine released into the synaptic cleft. The sequence is that of Acetylcholinesterase (ACHE) from Oryctolagus cuniculus (Rabbit).